The primary structure comprises 357 residues: Glutamine synthetase cytosolic isozyme 1-2 (357 aa).

The GS beta-grasp domain maps to 19–99 (IIAEYIWVGG…VMCDCYTPQG (81 aa)). One can recognise a GS catalytic domain in the interval 106–357 (KRHSAAKIFS…AETTLLWKQN (252 aa)).

It belongs to the glutamine synthetase family. In terms of assembly, homooctamer. In terms of tissue distribution, expressed in roots and at lower levels in leaf blades and spikelets (rice flower).

The protein resides in the cytoplasm. The enzyme catalyses L-glutamate + NH4(+) + ATP = L-glutamine + ADP + phosphate + H(+). Functionally, high-affinity glutamine synthetase involved in ammonium assimilation. Plays an important role in the primary assimilation of ammonium taken up by roots. Plays a role in maintaining nitrogen metabolic balance during ammonium assimilation, thus controlling plant growth and development. Reassimilates ammonium generated during lignification within developing tillers, which is probably required for the outgrowth of axillary buds. Required for nitrogen-dependent biosynthesis of cytokinin. Active cytokinin in axillary bud meristem is required for axillary bud outgrowth and necessary for tillering. The chain is Glutamine synthetase cytosolic isozyme 1-2 from Oryza sativa subsp. japonica (Rice).